Consider the following 286-residue polypeptide: Merozoite surface protein 2 (286 aa).

The signal sequence occupies residues 1–20; that stretch reads MKVIKTLSIINFFIFVTFNI. N22 and N36 each carry an N-linked (GlcNAc...) asparagine glycan. A disordered region spans residues 43–248; that stretch reads MTESKTPTPT…SQKECTDGNK (206 aa). The interval 44–212 is polymorphic region; that stretch reads TESKTPTPTG…EQTESPELQS (169 aa). Over residues 54 to 68 the composition is skewed to gly residues; it reads AGAGASGSAGSGDGA. Repeat unit 1 spans residues 59–68; the sequence is SGSAGSGDGA. Residues 59–106 are 5 X 10 AA tandem repeats of S-G-S-A-[GS]-[GS]-[AD]-G-A; sequence SGSAGSGDGASGSASGSASGSASGSAGASGSASGSAGASGSASGSAGA. One copy of the 2; partial repeat lies at 69 to 76; the sequence is SGSASGSA. The segment covering 69 to 137 has biased composition (low complexity); that stretch reads SGSASGSASG…STSTSSENPN (69 aa). A run of 3 repeats spans residues 77 to 86, 88 to 96, and 97 to 106. Polar residues-rich tracts occupy residues 153 to 179 and 186 to 214; these read KPNQ…NVPP and KSPT…QSAP. N-linked (GlcNAc...) asparagine glycosylation occurs at N163. N235 carries an N-linked (GlcNAc...) asparagine glycan. Positions 239–248 are enriched in basic and acidic residues; sequence SQKECTDGNK. A disulfide bridge links C243 with C251. 2 N-linked (GlcNAc...) asparagine glycosylation sites follow: N259 and N260. A lipid anchor (GPI-anchor amidated asparagine) is attached at N260. The propeptide at 261 to 286 is removed in mature form; sequence SSNIASINKFVVLISATLVLSFAIFI.

The protein localises to the cell membrane. May play a role in the merozoite attachment to the erythrocyte. The protein is Merozoite surface protein 2 of Plasmodium falciparum (isolate 311).